Here is a 455-residue protein sequence, read N- to C-terminus: Argininosuccinate lyase (455 aa).

It belongs to the lyase 1 family. Argininosuccinate lyase subfamily.

It localises to the cytoplasm. The catalysed reaction is 2-(N(omega)-L-arginino)succinate = fumarate + L-arginine. Its pathway is amino-acid biosynthesis; L-arginine biosynthesis; L-arginine from L-ornithine and carbamoyl phosphate: step 3/3. The chain is Argininosuccinate lyase from Shewanella baltica (strain OS223).